The following is a 432-amino-acid chain: Dihydroorotase (432 aa).

2 residues coordinate Zn(2+): H60 and H62. Substrate-binding positions include 62-64 (HLR) and N94. Zn(2+)-binding residues include D152, H179, and H232. Substrate is bound at residue N278. D305 is a Zn(2+) binding site. D305 is a catalytic residue. Substrate-binding positions include H309 and 323–324 (FG).

Belongs to the metallo-dependent hydrolases superfamily. DHOase family. Class I DHOase subfamily. Zn(2+) is required as a cofactor.

It catalyses the reaction (S)-dihydroorotate + H2O = N-carbamoyl-L-aspartate + H(+). It participates in pyrimidine metabolism; UMP biosynthesis via de novo pathway; (S)-dihydroorotate from bicarbonate: step 3/3. In terms of biological role, catalyzes the reversible cyclization of carbamoyl aspartate to dihydroorotate. In Elusimicrobium minutum (strain Pei191), this protein is Dihydroorotase.